We begin with the raw amino-acid sequence, 820 residues long: Inhibitor of nuclear factor kappa-B kinase epsilon subunit homolog 1 (820 aa).

The 279-residue stretch at Leu21–Thr299 folds into the Protein kinase domain. ATP contacts are provided by residues Ile27–Val35 and Lys49. Residue Asp149 is the Proton acceptor of the active site. Residues Ser758–Asn798 form a disordered region.

It belongs to the protein kinase superfamily. Ser/Thr protein kinase family. Interacts with allo-1 (via N-terminus); the interaction is direct. In terms of tissue distribution, expressed in oocytes.

It is found in the cytoplasm. It carries out the reaction L-seryl-[protein] + ATP = O-phospho-L-seryl-[protein] + ADP + H(+). The catalysed reaction is L-threonyl-[protein] + ATP = O-phospho-L-threonyl-[protein] + ADP + H(+). Functionally, serine/threonine-protein kinase, which plays a role in regulating allophagy, an autophagic process in which paternal organelles, including mitochondria and membranous organelles, are degraded in embryos. Phosphorylates the allophagy receptor allo-1, which is required for allophagy. The protein is Inhibitor of nuclear factor kappa-B kinase epsilon subunit homolog 1 of Caenorhabditis elegans.